Reading from the N-terminus, the 833-residue chain is Copper-exporting P-type ATPase (833 aa).

HMA domains lie at 3–64 (QTID…YGAT) and 98–161 (ESQQ…YGAE). Cys14, Cys17, Cys109, and Cys112 together coordinate Cu(+). 6 consecutive transmembrane segments (helical) span residues 186–206 (WQAIVALAVGIPVMVWGMIGD), 217–237 (LWLAIGLITLAVMVFAGGHFY), 253–273 (TLVALGTGVAWLYSMSVNLWP), 283–303 (LYYEASAMIIGLINLGHMLEA), 437–457 (AVFVPVVVAIALFSAAIWYFF), and 463–483 (IVYTLVIATTVLIIACPCALG). Asp522 acts as the 4-aspartylphosphate intermediate in catalysis. Residues Asp719 and Asp723 each coordinate Mg(2+). 2 helical membrane-spanning segments follow: residues 778–798 (LGAFIYNSIGIPVAAGILWPF) and 800–820 (GTLLNPVVAGAAMALSSITVV).

It belongs to the cation transport ATPase (P-type) (TC 3.A.3) family. Type IB subfamily.

The protein resides in the cell inner membrane. The protein localises to the cytoplasm. It carries out the reaction Cu(+)(in) + ATP + H2O = Cu(+)(out) + ADP + phosphate + H(+). In terms of biological role, involved in Cu(+) export. Essential for copper tolerance under both aerobic and anaerobic conditions. Functionally, probably also encodes a cytoplasmic copper chaperone CopA(Z) that is produced by programmed ribosomal frameshifting. The polypeptide is Copper-exporting P-type ATPase (copA) (Salmonella typhimurium (strain LT2 / SGSC1412 / ATCC 700720)).